The sequence spans 545 residues: CTP synthase (545 aa).

The interval Met-1–Phe-266 is amidoligase domain. Ser-13 contributes to the CTP binding site. Residue Ser-13 coordinates UTP. ATP-binding positions include Ser-14–Ile-19 and Asp-71. Residues Asp-71 and Glu-140 each coordinate Mg(2+). CTP-binding positions include Asp-147–Glu-149, Lys-187–Gln-192, and Lys-223. UTP is bound by residues Lys-187–Gln-192 and Lys-223. Lys-239–Ala-241 lines the ATP pocket. The region spanning Arg-292 to Lys-543 is the Glutamine amidotransferase type-1 domain. Residue Gly-353 coordinates L-glutamine. Residue Cys-380 is the Nucleophile; for glutamine hydrolysis of the active site. L-glutamine is bound by residues Leu-381 to Gln-384, Glu-404, and Arg-471. Residues His-516 and Glu-518 contribute to the active site.

Belongs to the CTP synthase family. In terms of assembly, homotetramer.

The catalysed reaction is UTP + L-glutamine + ATP + H2O = CTP + L-glutamate + ADP + phosphate + 2 H(+). It catalyses the reaction L-glutamine + H2O = L-glutamate + NH4(+). It carries out the reaction UTP + NH4(+) + ATP = CTP + ADP + phosphate + 2 H(+). Its pathway is pyrimidine metabolism; CTP biosynthesis via de novo pathway; CTP from UDP: step 2/2. With respect to regulation, allosterically activated by GTP, when glutamine is the substrate; GTP has no effect on the reaction when ammonia is the substrate. The allosteric effector GTP functions by stabilizing the protein conformation that binds the tetrahedral intermediate(s) formed during glutamine hydrolysis. Inhibited by the product CTP, via allosteric rather than competitive inhibition. In terms of biological role, catalyzes the ATP-dependent amination of UTP to CTP with either L-glutamine or ammonia as the source of nitrogen. Regulates intracellular CTP levels through interactions with the four ribonucleotide triphosphates. This is CTP synthase from Acinetobacter baumannii (strain ACICU).